An 840-amino-acid chain; its full sequence is Kinesin-like protein KIN-14J (840 aa).

Positions 1–74 (MEADPAPSST…KGEEPVVSAE (74 aa)) are disordered. The region spanning 177–501 (NIRVFCRCRP…LNFASRVRAI (325 aa)) is the Kinesin motor domain. Position 260 to 267 (260 to 267 (GQTGTGKT)) interacts with ATP. Residues 517 to 594 (KLKQMTEKIR…KKAARDTARS (78 aa)) are a coiled coil. Basic and acidic residues predominate over residues 581–593 (LANEKKAARDTAR). The interval 581-617 (LANEKKAARDTARSTKPPLAPMRQRPPLGRIGNHIPP) is disordered.

This sequence belongs to the TRAFAC class myosin-kinesin ATPase superfamily. Kinesin family. KIN-14 subfamily.

In Oryza sativa subsp. japonica (Rice), this protein is Kinesin-like protein KIN-14J.